The sequence spans 66 residues: MTPPHSDRPEDTADPKLLEILVCPVTKGPLELDGARRELISRSAKLAYPIRDGIPIMLPEEARKIE.

It belongs to the UPF0434 family.

This is UPF0434 protein Nwi_0075 from Nitrobacter winogradskyi (strain ATCC 25391 / DSM 10237 / CIP 104748 / NCIMB 11846 / Nb-255).